The following is a 381-amino-acid chain: Adaptive-response sensory kinase SasA (381 aa).

The region spanning Met154–Asp367 is the Histidine kinase domain. His157 carries the post-translational modification Phosphohistidine; by autocatalysis.

Homooligomerizes. Interacts with KaiC. Participates in the KaiBC complex, whose core is composed of a KaiC homohexamer and 6 KaiB.

The enzyme catalyses ATP + protein L-histidine = ADP + protein N-phospho-L-histidine.. Its function is as follows. Member of the two-component regulatory system SasA/RpaA involved in genome-wide circadian gene expression. One of several clock output pathways. Participates in the Kai clock protein complex, the main circadian regulator in cyanobacteria, via its interaction with KaiC. KaiC enhances the autophosphorylation activity of SasA, which then transfers its phosphate group to RpaA to activate it. In addition to its output function, recruits fold-shifted KaiB (KaiB(fs)) to KaiC to cooperatively form the KaiB(6):KaiC(6) complex (independent of SasA kinase activity). Required for robustness of the circadian rhythm of gene expression and is involved in clock output, also required for adaptation to light/dark cycles. In Prochlorococcus marinus (strain SARG / CCMP1375 / SS120), this protein is Adaptive-response sensory kinase SasA.